The chain runs to 193 residues: Urease accessory protein UreE (193 aa).

Residues 138 to 193 are disordered; that stretch reads RGAYHSHGAHSHDQGHAAHDHGNEHKHDHGHDHVHGPGCDHDHDHDHGHHHDHKHD. Basic and acidic residues predominate over residues 147–193; sequence HSHDQGHAAHDHGNEHKHDHGHDHVHGPGCDHDHDHDHGHHHDHKHD.

This sequence belongs to the UreE family.

The protein resides in the cytoplasm. Involved in urease metallocenter assembly. Binds nickel. Probably functions as a nickel donor during metallocenter assembly. This chain is Urease accessory protein UreE, found in Rhizobium leguminosarum bv. trifolii (strain WSM2304).